Reading from the N-terminus, the 185-residue chain is Ribosome-recycling factor (185 aa).

Lysine 162 carries the post-translational modification N6-acetyllysine.

This sequence belongs to the RRF family.

The protein localises to the cytoplasm. In terms of biological role, responsible for the release of ribosomes from messenger RNA at the termination of protein biosynthesis. May increase the efficiency of translation by recycling ribosomes from one round of translation to another. In Shigella boydii serotype 18 (strain CDC 3083-94 / BS512), this protein is Ribosome-recycling factor.